A 1742-amino-acid chain; its full sequence is NACHT and WD repeat domain-containing protein 2 (1742 aa).

LRR repeat units follow at residues 386-410 (FYEY…GHIN), 677-698 (LEDV…TRPS), 724-747 (VKNV…LYLQ), 883-906 (YSQE…VTAF), and 925-953 (LPKL…SSMD). Residues 410 to 737 (NPLIIYGGPC…TLLVWANRHL (328 aa)) enclose the NACHT domain. 11 WD repeats span residues 963–1004 (LSSS…LLRQ), 1007–1046 (TAQS…LLSE), 1140–1179 (FSGG…SPQL), 1229–1271 (KHNE…ASLQ), 1272–1311 (EISG…AMSN), 1314–1353 (KTGK…IEAV), 1355–1394 (KHEG…NLFR), 1396–1434 (NGQR…RVCN), 1476–1516 (EDGT…ICRR), 1522–1564 (NFLK…VHAS), and 1614–1653 (SLYK…DAAL).

The sequence is that of NACHT and WD repeat domain-containing protein 2 (NWD2) from Homo sapiens (Human).